Here is a 350-residue protein sequence, read N- to C-terminus: Cobalt-precorrin-5B C(1)-methyltransferase (350 aa).

It belongs to the CbiD family.

It carries out the reaction Co-precorrin-5B + S-adenosyl-L-methionine = Co-precorrin-6A + S-adenosyl-L-homocysteine. Its pathway is cofactor biosynthesis; adenosylcobalamin biosynthesis; cob(II)yrinate a,c-diamide from sirohydrochlorin (anaerobic route): step 6/10. Catalyzes the methylation of C-1 in cobalt-precorrin-5B to form cobalt-precorrin-6A. In Sulfurisphaera tokodaii (strain DSM 16993 / JCM 10545 / NBRC 100140 / 7) (Sulfolobus tokodaii), this protein is Cobalt-precorrin-5B C(1)-methyltransferase.